The following is a 284-amino-acid chain: D-tagatose-1,6-bisphosphate aldolase subunit GatY (284 aa).

Catalysis depends on aspartate 82, which acts as the Proton donor. Residues histidine 83 and histidine 180 each coordinate Zn(2+). Residue glycine 181 participates in dihydroxyacetone phosphate binding. Histidine 208 contributes to the Zn(2+) binding site. Residues 209–211 (GAS) and 230–233 (NVAT) each bind dihydroxyacetone phosphate.

This sequence belongs to the class II fructose-bisphosphate aldolase family. TagBP aldolase GatY subfamily. In terms of assembly, forms a complex with GatZ. Zn(2+) serves as cofactor.

The enzyme catalyses D-tagatofuranose 1,6-bisphosphate = D-glyceraldehyde 3-phosphate + dihydroxyacetone phosphate. It participates in carbohydrate metabolism; D-tagatose 6-phosphate degradation; D-glyceraldehyde 3-phosphate and glycerone phosphate from D-tagatose 6-phosphate: step 2/2. Catalytic subunit of the tagatose-1,6-bisphosphate aldolase GatYZ, which catalyzes the reversible aldol condensation of dihydroxyacetone phosphate (DHAP or glycerone-phosphate) with glyceraldehyde 3-phosphate (G3P) to produce tagatose 1,6-bisphosphate (TBP). Requires GatZ subunit for full activity and stability. Is involved in the catabolism of galactitol. The sequence is that of D-tagatose-1,6-bisphosphate aldolase subunit GatY from Escherichia coli O157:H7.